A 170-amino-acid chain; its full sequence is NADH-quinone oxidoreductase subunit B (170 aa).

Residues Cys-37, Cys-38, Cys-102, and Cys-131 each coordinate [4Fe-4S] cluster.

It belongs to the complex I 20 kDa subunit family. In terms of assembly, NDH-1 is composed of 14 different subunits. Subunits NuoB, C, D, E, F, and G constitute the peripheral sector of the complex. It depends on [4Fe-4S] cluster as a cofactor.

The protein localises to the cell inner membrane. It catalyses the reaction a quinone + NADH + 5 H(+)(in) = a quinol + NAD(+) + 4 H(+)(out). Its function is as follows. NDH-1 shuttles electrons from NADH, via FMN and iron-sulfur (Fe-S) centers, to quinones in the respiratory chain. The immediate electron acceptor for the enzyme in this species is believed to be ubiquinone. Couples the redox reaction to proton translocation (for every two electrons transferred, four hydrogen ions are translocated across the cytoplasmic membrane), and thus conserves the redox energy in a proton gradient. The chain is NADH-quinone oxidoreductase subunit B from Geotalea uraniireducens (strain Rf4) (Geobacter uraniireducens).